A 341-amino-acid polypeptide reads, in one-letter code: Trans-3-hydroxy-L-proline dehydratase (341 aa).

Ser90 functions as the Proton acceptor in the catalytic mechanism. Substrate contacts are provided by residues 91 to 92 (GS), Asp252, and 257 to 258 (GT).

It belongs to the proline racemase family.

The enzyme catalyses trans-3-hydroxy-L-proline = 1-pyrroline-2-carboxylate + H2O. Functionally, catalyzes the dehydration of trans-3-hydroxy-L-proline (t3LHyp) to Delta(1)-pyrroline-2-carboxylate (Pyr2C). May be involved in a degradation pathway of t3LHyp, which would allow L.aggregata to grow on t3LHyp as a sole carbon source. Displays neither proline racemase activity nor 4-hydroxyproline 2-epimerase activity. This chain is Trans-3-hydroxy-L-proline dehydratase, found in Roseibium aggregatum (strain ATCC 25650 / DSM 13394 / JCM 20685 / NBRC 16684 / NCIMB 2208 / IAM 12614 / B1) (Stappia aggregata).